The sequence spans 220 residues: RNA-free ribonuclease P (220 aa).

Belongs to the HARP family.

It catalyses the reaction Endonucleolytic cleavage of RNA, removing 5'-extranucleotides from tRNA precursor.. RNA-free RNase P that catalyzes the removal of the 5'-leader sequence from pre-tRNA to produce the mature 5'-terminus. The sequence is that of RNA-free ribonuclease P from Methanothermobacter thermautotrophicus (strain ATCC 29096 / DSM 1053 / JCM 10044 / NBRC 100330 / Delta H) (Methanobacterium thermoautotrophicum).